Here is a 146-residue protein sequence, read N- to C-terminus: Ribosome maturation factor RimP (146 aa).

The protein belongs to the RimP family.

The protein resides in the cytoplasm. In terms of biological role, required for maturation of 30S ribosomal subunits. The chain is Ribosome maturation factor RimP from Helicobacter pylori (strain J99 / ATCC 700824) (Campylobacter pylori J99).